An 834-amino-acid polypeptide reads, in one-letter code: Sodium/hydrogen exchanger 3 (834 aa).

An N-terminal signal peptide occupies residues Met1–Ala25. Residues Gly26–His51 are Extracellular-facing. The helical transmembrane segment at Val52–Leu74 threads the bilayer. Over Ser75–Val82 the chain is Cytoplasmic. A helical transmembrane segment spans residues Pro83–Ala102. The Extracellular segment spans residues Asp103–Thr111. Residues Pro112–Tyr129 traverse the membrane as a helical segment. The Cytoplasmic segment spans residues Phe130–Pro132. A helical membrane pass occupies residues Asn133–Ser168. Residues Gly138, Gly141, and Thr142 each coordinate a 1,2-diacyl-sn-glycero-3-phospho-(1D-myo-inositol). Topologically, residues Gly169 to Phe181 are extracellular. Residues Leu182–Val203 traverse the membrane as a helical segment. The Cytoplasmic portion of the chain corresponds to His204–Val205. Residues Asn206–Leu237 traverse the membrane as a helical segment. Over Gly238–Gly244 the chain is Extracellular. N-linked (GlcNAc...) asparagine glycosylation is present at Asn241. The helical transmembrane segment at Val245–Thr279 threads the bilayer. Over Lys280–His281 the chain is Cytoplasmic. Residues Val282–Leu304 traverse the membrane as a helical segment. Over Ser305–Leu306 the chain is Extracellular. The helical transmembrane segment at Ser307 to Val323 threads the bilayer. Topologically, residues Lys324 to Gln330 are cytoplasmic. Residues Ser331–Val359 form a helical membrane-spanning segment. Residues Asn360–Asn367 lie on the Extracellular side of the membrane. The helical transmembrane segment at Thr368 to Gln389 threads the bilayer. Residues Thr390–Glu402 lie on the Cytoplasmic side of the membrane. Met398 serves as a coordination point for a 1,2-diacyl-sn-glycero-3-phospho-(1D-myo-inositol). A helical transmembrane segment spans residues Pro403–Leu426. Over Asp427–Glu433 the chain is Extracellular. The chain crosses the membrane as a helical span at residues Lys434–Arg467. Residues Ser468–Met834 are Cytoplasmic-facing. A 1,2-diacyl-sn-glycero-3-phospho-(1D-myo-inositol) is bound by residues Gln497, Ile498, and His500. A phosphoserine mark is found at Ser555 and Ser563. The segment at Arg575–Glu589 is interaction with EZR. The interval Asn590–Thr667 is interaction with NHERF4. The segment at Val591 to Pro695 is interaction with AHCYL1. 2 positions are modified to phosphoserine: Ser592 and Ser607. Ser663 is subject to Phosphoserine; by SGK1. Positions Lys679 to Asn691 are enriched in basic residues. The tract at residues Lys679 to Glu728 is disordered. Residues Leu717–Glu728 show a composition bias toward acidic residues. Phosphoserine is present on residues Ser718, Ser810, and Ser813. Residues Phe814–Met834 form a disordered region.

This sequence belongs to the monovalent cation:proton antiporter 1 (CPA1) transporter (TC 2.A.36) family. In terms of assembly, homodimer. Found in the forms of complex and dynamic macromolecular complexes. Binds NHERF1 and NHERF2. Interacts with CHP1; increases SLC9A3 trafficking and activity at the plasma membrane. Interacts with CHP2 and SHANK2. Interacts with PDZK1 (via C-terminal PDZ domain). Interacts with NHERF4 and interaction decrease in response to elevated calcium ion levels. Interacts with AHCYL1; the interaction is required for SLC9A3 activity. Interacts with SNX27 (via PDZ domains); directs SLC9A3 membrane insertion from early endosomes to the plasma membrane. Interacts with EZR; interaction targets SLC9A3 to the apical membrane. Post-translationally, phosphorylated by PKA, which inhibits activity. Phosphorylation at Ser-663 by SGK1 is associated with increased abundance at the cell membrane. Phosphorylation at Ser-718 by CSNK2A1 regulates SLC9A3 activity through the formation of multiple signaling complexes.

Its subcellular location is the apical cell membrane. The protein resides in the cell membrane. The protein localises to the recycling endosome membrane. It is found in the early endosome membrane. The catalysed reaction is Na(+)(in) + H(+)(out) = Na(+)(out) + H(+)(in). Seems to switch between active and inactive modes in response to various stimuli. Activated directly or indirectly by membrane phosphatidylinositol (PIs). Regulated by a variety of auxiliary proteins, which facilitate the maturation, cell surface expression and function of the transporter. Inhibited specifically by the drug tenapanor. Functionally, plasma membrane Na(+)/H(+) antiporter. Exchanges intracellular H(+) ions for extracellular Na(+) in 1:1 stoichiometry, playing a key role in salt and fluid absorption and pH homeostasis. Major apical Na(+)/H(+) exchanger in kidney and intestine playing an important role in renal and intestine Na(+) absorption and blood pressure regulation. The sequence is that of Sodium/hydrogen exchanger 3 from Homo sapiens (Human).